Here is a 138-residue protein sequence, read N- to C-terminus: Protein Turandot B (138 aa).

Positions 1–21 are cleaved as a signal peptide; that stretch reads MNFKTSLICFALLLIGTLCSA.

Belongs to the Turandot family.

The protein resides in the secreted. In terms of biological role, a humoral factor that may play a role in stress tolerance. The chain is Protein Turandot B from Drosophila melanogaster (Fruit fly).